Reading from the N-terminus, the 633-residue chain is DNA mismatch repair protein MutL (633 aa).

A disordered region spans residues 338–407 (AAPEPERTLP…VPPPTLRAIP (70 aa)). The span at 366-391 (PGSAFPAAARPAPASSAAQPPLSSSA) shows a compositional bias: low complexity.

This sequence belongs to the DNA mismatch repair MutL/HexB family.

Its function is as follows. This protein is involved in the repair of mismatches in DNA. It is required for dam-dependent methyl-directed DNA mismatch repair. May act as a 'molecular matchmaker', a protein that promotes the formation of a stable complex between two or more DNA-binding proteins in an ATP-dependent manner without itself being part of a final effector complex. The protein is DNA mismatch repair protein MutL of Akkermansia muciniphila (strain ATCC BAA-835 / DSM 22959 / JCM 33894 / BCRC 81048 / CCUG 64013 / CIP 107961 / Muc).